The primary structure comprises 259 residues: Ribosomal RNA small subunit methyltransferase A (259 aa).

Asn13, Leu15, Gly39, Glu60, Asp84, and Asn101 together coordinate S-adenosyl-L-methionine.

Belongs to the class I-like SAM-binding methyltransferase superfamily. rRNA adenine N(6)-methyltransferase family. RsmA subfamily.

It is found in the cytoplasm. The catalysed reaction is adenosine(1518)/adenosine(1519) in 16S rRNA + 4 S-adenosyl-L-methionine = N(6)-dimethyladenosine(1518)/N(6)-dimethyladenosine(1519) in 16S rRNA + 4 S-adenosyl-L-homocysteine + 4 H(+). Functionally, specifically dimethylates two adjacent adenosines (A1518 and A1519) in the loop of a conserved hairpin near the 3'-end of 16S rRNA in the 30S particle. May play a critical role in biogenesis of 30S subunits. The sequence is that of Ribosomal RNA small subunit methyltransferase A from Mesomycoplasma hyopneumoniae (strain J / ATCC 25934 / NCTC 10110) (Mycoplasma hyopneumoniae).